The following is a 140-amino-acid chain: Large ribosomal subunit protein uL14 (140 aa).

Belongs to the universal ribosomal protein uL14 family. In terms of assembly, part of the 50S ribosomal subunit. Forms a cluster with proteins L3 and L24e, part of which may contact the 16S rRNA in 2 intersubunit bridges.

Functionally, binds to 23S rRNA. Forms part of two intersubunit bridges in the 70S ribosome. The protein is Large ribosomal subunit protein uL14 of Nitrosopumilus maritimus (strain SCM1).